Here is a 716-residue protein sequence, read N- to C-terminus: Macrophage-expressed gene 1 protein (716 aa).

A signal peptide spans 1–20 (MNNFRATILFWAVAAWVTSG). Residues 30-345 (GVQKCKNALK…TAVKRYYTFN (316 aa)) form the MACPF domain. Cys-34 and Cys-70 are oxidised to a cystine. Beta stranded transmembrane passes span 113-120 (YSINTELS) and 127-132 (GKFSTE). 2 N-linked (GlcNAc...) asparagine glycosylation sites follow: Asn-168 and Asn-185. 2 beta stranded membrane-spanning segments follow: residues 235–244 (AVTASAGLAF) and 248–256 (VNFKFEENY). Asn-269 is a glycosylation site (N-linked (GlcNAc...) asparagine). Cysteines 350 and 369 form a disulfide. Asn-375 carries N-linked (GlcNAc...) asparagine glycosylation. 5 cysteine pairs are disulfide-bonded: Cys-385–Cys-397, Cys-435–Cys-449, Cys-439–Cys-445, Cys-534–Cys-572, and Cys-557–Cys-577. The segment at 413–656 (PSGYSPVRLL…GDGGGLSGGA (244 aa)) is P2. Residues 656 to 676 (AAAGVTLGVTTILAVVITLAI) traverse the membrane as a helical segment. A disordered region spans residues 693 to 716 (RQSLVPGTAATGDTTYQEQGQSPA). The segment covering 703 to 716 (TGDTTYQEQGQSPA) has biased composition (polar residues).

Belongs to the MPEG1 family. Homooligomer; predominantly forms a homooligomeric arc-shaped pore complex instead of complete rings of 16 subunits. Proteolytically processed in two steps to generate the Macrophage-expressed gene 1 protein, processed form: cleaved by trypsin in proximity of the helical transmembrane domain releases the ectodomain into the lysosomal lumen to orient the pore-forming domain toward the endogenous membranes, and processed by the asparagine endopeptidase (LGMN). Proteolytic processing in antigen-containing vesicles is pH-dependent. Post-translationally, monoubiquitinated in response to bacterial infection; ubiquitination is required for vesicular localization and antibacterial activity and can be blocked by bacterial cell cycle inhibiting factor (cif).

The protein resides in the cytoplasmic vesicle membrane. It localises to the cytoplasmic vesicle. The protein localises to the phagosome membrane. Forms arc- and ring-shaped pre-pores on top of the membrane at neutral to slightly acidic pH conditions and converts to pores upon acidification. Undergoes transition from the pre-pore to the pore in a processive clockwise hand-over-hand process. In the pore state, 2 alpha-helical regions refold into transmembrane hairpins (TMH1 and TMH2) in each protomer that form in the ensemble complex giant beta-barrel transmembrane pores. Pore-forming protein involved in both innate and adaptive immunity. Plays a central role in antigen cross-presentation in dendritic cells by forming a pore in antigen-containing compartments, thereby promoting delivery of antigens for cross-presentation. Also involved in innate immune response following bacterial infection; shows antibacterial activity against a wide spectrum of Gram-positive, Gram-negative and acid-fast bacteria. Reduces the viability of the intracytosolic pathogen L.monocytogenes by inhibiting acidification of the phagocytic vacuole of host cells which restricts bacterial translocation from the vacuole to the cytosol. Required for the antibacterial activity of reactive oxygen species and nitric oxide. In terms of biological role, pore-forming protein that plays a central role in antigen cross-presentation in dendritic cells by mediating delivery of antigens for cross-presentation. Dendritic cells bridge innate and adaptive immunity by capturing exogenous antigens on MHC class-I molecules and presenting them to naive CD8(+) T-cells. Acts by forming a pore in antigen-containing compartments, promoting the release of antigens into the cytosol, enabling generation of MHCI:peptide complexes and T-cell priming. The polypeptide is Macrophage-expressed gene 1 protein (MPEG1) (Pongo abelii (Sumatran orangutan)).